The sequence spans 162 residues: Ribosomal RNA large subunit methyltransferase H (162 aa).

S-adenosyl-L-methionine-binding residues include L78 and G110.

This sequence belongs to the RNA methyltransferase RlmH family. As to quaternary structure, homodimer.

It is found in the cytoplasm. It catalyses the reaction pseudouridine(1915) in 23S rRNA + S-adenosyl-L-methionine = N(3)-methylpseudouridine(1915) in 23S rRNA + S-adenosyl-L-homocysteine + H(+). In terms of biological role, specifically methylates the pseudouridine at position 1915 (m3Psi1915) in 23S rRNA. The chain is Ribosomal RNA large subunit methyltransferase H from Bradyrhizobium sp. (strain ORS 278).